The primary structure comprises 349 residues: Glycerol-3-phosphate dehydrogenase [NAD(+)], cytoplasmic (349 aa).

Residues 10-15, Phe41, and Phe97 each bind NAD(+); that span reads GSGNWG. Lys120 is a binding site for substrate. Residue Ala153 participates in NAD(+) binding. Ser154 bears the Phosphoserine mark. Lys204 serves as the catalytic Proton acceptor. Arg269 is an NAD(+) binding site. Residue 269–270 participates in substrate binding; the sequence is RN. The residue at position 289 (Lys289) is an N6-succinyllysine. NAD(+)-binding residues include Lys296 and Gln298. Tyr326 is subject to Phosphotyrosine.

The protein belongs to the NAD-dependent glycerol-3-phosphate dehydrogenase family. In terms of assembly, homodimer. As to expression, expressed in liver (at protein level).

The protein resides in the cytoplasm. It catalyses the reaction sn-glycerol 3-phosphate + NAD(+) = dihydroxyacetone phosphate + NADH + H(+). Inhibited by zinc ions and sulfate. Functionally, has glycerol-3-phosphate dehydrogenase activity. The polypeptide is Glycerol-3-phosphate dehydrogenase [NAD(+)], cytoplasmic (Homo sapiens (Human)).